A 288-amino-acid chain; its full sequence is Acetyl-coenzyme A carboxylase carboxyl transferase subunit beta (288 aa).

Residues Leu34–Ser288 enclose the CoA carboxyltransferase N-terminal domain. Residues Cys38, Cys41, Cys56, and Cys59 each coordinate Zn(2+). The C4-type zinc finger occupies Cys38 to Cys59.

This sequence belongs to the AccD/PCCB family. Acetyl-CoA carboxylase is a heterohexamer composed of biotin carboxyl carrier protein (AccB), biotin carboxylase (AccC) and two subunits each of ACCase subunit alpha (AccA) and ACCase subunit beta (AccD). The cofactor is Zn(2+).

It localises to the cytoplasm. It carries out the reaction N(6)-carboxybiotinyl-L-lysyl-[protein] + acetyl-CoA = N(6)-biotinyl-L-lysyl-[protein] + malonyl-CoA. The protein operates within lipid metabolism; malonyl-CoA biosynthesis; malonyl-CoA from acetyl-CoA: step 1/1. Its function is as follows. Component of the acetyl coenzyme A carboxylase (ACC) complex. Biotin carboxylase (BC) catalyzes the carboxylation of biotin on its carrier protein (BCCP) and then the CO(2) group is transferred by the transcarboxylase to acetyl-CoA to form malonyl-CoA. The sequence is that of Acetyl-coenzyme A carboxylase carboxyl transferase subunit beta from Streptococcus equi subsp. zooepidemicus (strain MGCS10565).